The sequence spans 201 residues: Peptidyl-tRNA hydrolase (201 aa).

Tyr-14 serves as a coordination point for tRNA. The active-site Proton acceptor is the His-19. TRNA-binding residues include Tyr-64, Asn-66, and Asn-112.

This sequence belongs to the PTH family. Monomer.

It is found in the cytoplasm. It catalyses the reaction an N-acyl-L-alpha-aminoacyl-tRNA + H2O = an N-acyl-L-amino acid + a tRNA + H(+). Its function is as follows. Hydrolyzes ribosome-free peptidyl-tRNAs (with 1 or more amino acids incorporated), which drop off the ribosome during protein synthesis, or as a result of ribosome stalling. In terms of biological role, catalyzes the release of premature peptidyl moieties from peptidyl-tRNA molecules trapped in stalled 50S ribosomal subunits, and thus maintains levels of free tRNAs and 50S ribosomes. The polypeptide is Peptidyl-tRNA hydrolase (Bradyrhizobium diazoefficiens (strain JCM 10833 / BCRC 13528 / IAM 13628 / NBRC 14792 / USDA 110)).